A 448-amino-acid chain; its full sequence is Binary larvicide subunit BinB (448 aa).

The tract at residues 19–200 (TNYPLNTTPT…FVNSSFYAAA (182 aa)) is beta-trefoil domain. Cysteines 67 and 161 form a disulfide. Residues 226 to 407 (PKDAVRAVKG…APITNPLTLT (182 aa)) form a probable pore-forming domain region.

The protein belongs to the toxin_10 family. As to quaternary structure, forms a heterodimer with BinA. In terms of processing, processed by proteases extracted from mosquito larval gut.

The protein resides in the spore. It is found in the perispore. In terms of biological role, component of a binary toxin active against Culex and some Aedes mosquito larvae. This subunit is responsible for localized binding to specific regions of the host larval gut. The individual subunits are not toxic. BinAB and this subunit alone bind to the gastric caecum and posterior midgut of C.quinquefasciatus larvae. Binary toxin internalization into host gut cells requires both proteins. Does not bind to the midgut of Aedes aegypti. Toxic to Aedes atropalpus mosquito larvae; mortality towards both C.quinquefasciatus and A.atropalpus is maximal by 48 hours. A.aegypti is not very susceptible to this toxin. Binding component of binary toxin. The 51 kDa polypeptide acts synergetically with the 42 kDa polypeptide for expression of a larvicidal toxin. In Lysinibacillus sphaericus (Bacillus sphaericus), this protein is Binary larvicide subunit BinB.